Consider the following 142-residue polypeptide: Alpha-lactalbumin (142 aa).

The signal sequence occupies residues 1 to 18; that stretch reads MMSFVSLLLVGILFHATQ. The C-type lysozyme domain occupies 20-142; the sequence is EQLTKCEVFR…KLDQWLCEKL (123 aa). Intrachain disulfides connect C25/C139, C47/C130, C80/C96, and C92/C110. Residues N64 and N93 are each glycosylated (N-linked (GlcNAc...) asparagine). Positions 98, 101, 103, 106, and 107 each coordinate Ca(2+).

This sequence belongs to the glycosyl hydrolase 22 family. Lactose synthase (LS) is a heterodimer of a catalytic component, beta1,4-galactosyltransferase (beta4Gal-T1) and a regulatory component, alpha-lactalbumin (LA). Mammary gland specific. Secreted in milk.

It is found in the secreted. In terms of biological role, regulatory subunit of lactose synthase, changes the substrate specificity of galactosyltransferase in the mammary gland making glucose a good acceptor substrate for this enzyme. This enables LS to synthesize lactose, the major carbohydrate component of milk. In other tissues, galactosyltransferase transfers galactose onto the N-acetylglucosamine of the oligosaccharide chains in glycoproteins. The sequence is that of Alpha-lactalbumin (LALBA) from Bubalus bubalis (Domestic water buffalo).